A 618-amino-acid polypeptide reads, in one-letter code: Carbamoyl phosphate synthase large chain, C-terminal section (618 aa).

Positions 1-78 are oligomerization domain; sequence MDMEKLKEIL…ETFVYKEQDE (78 aa). Residues 79 to 477 are carbamoyl phosphate synthetic domain; sequence SNPSDRKKVI…YKAQLSANME (399 aa). The region spanning 208–399 is the ATP-grasp domain; sequence SKLLKKLNIP…LAKLATKIML (192 aa). Residues Arg244, Lys283, Leu285, Glu290, Gly315, Val316, His317, Ser318, Gln358, and Glu370 each contribute to the ATP site. The Mg(2+) site is built by Gln358, Glu370, and Asn372. Gln358, Glu370, and Asn372 together coordinate Mn(2+). Residues 476–618 enclose the MGS-like domain; it reads MELPIVGNVF…ELDARIKNRF (143 aa). The interval 478–618 is allosteric domain; that stretch reads LPIVGNVFIS…ELDARIKNRF (141 aa).

This sequence belongs to the CarB family. As to quaternary structure, composed of two chains; the small (or glutamine) chain promotes the hydrolysis of glutamine to ammonia, which is used by the large (or ammonia) chain to synthesize carbamoyl phosphate. Tetramer of heterodimers (alpha,beta)4. The cofactor is Mg(2+). Mn(2+) is required as a cofactor.

It catalyses the reaction hydrogencarbonate + L-glutamine + 2 ATP + H2O = carbamoyl phosphate + L-glutamate + 2 ADP + phosphate + 2 H(+). It carries out the reaction hydrogencarbonate + NH4(+) + 2 ATP = carbamoyl phosphate + 2 ADP + phosphate + 2 H(+). The protein operates within amino-acid biosynthesis; L-arginine biosynthesis; carbamoyl phosphate from bicarbonate: step 1/1. It functions in the pathway pyrimidine metabolism; UMP biosynthesis via de novo pathway; (S)-dihydroorotate from bicarbonate: step 1/3. In terms of biological role, large subunit of the glutamine-dependent carbamoyl phosphate synthetase (CPSase). CPSase catalyzes the formation of carbamoyl phosphate from the ammonia moiety of glutamine, carbonate, and phosphate donated by ATP, constituting the first step of 2 biosynthetic pathways, one leading to arginine and/or urea and the other to pyrimidine nucleotides. The large subunit (synthetase) binds the substrates ammonia (free or transferred from glutamine from the small subunit), hydrogencarbonate and ATP and carries out an ATP-coupled ligase reaction, activating hydrogencarbonate by forming carboxy phosphate which reacts with ammonia to form carbamoyl phosphate. The sequence is that of Carbamoyl phosphate synthase large chain, C-terminal section (carB2) from Methanocaldococcus jannaschii (strain ATCC 43067 / DSM 2661 / JAL-1 / JCM 10045 / NBRC 100440) (Methanococcus jannaschii).